Consider the following 468-residue polypeptide: Argininosuccinate lyase (468 aa).

Belongs to the lyase 1 family. Argininosuccinate lyase subfamily.

Its subcellular location is the cytoplasm. It carries out the reaction 2-(N(omega)-L-arginino)succinate = fumarate + L-arginine. It participates in amino-acid biosynthesis; L-arginine biosynthesis; L-arginine from L-ornithine and carbamoyl phosphate: step 3/3. The polypeptide is Argininosuccinate lyase (Cutibacterium acnes (strain DSM 16379 / KPA171202) (Propionibacterium acnes)).